Consider the following 358-residue polypeptide: Heme A synthase (358 aa).

Transmembrane regions (helical) follow at residues 25–45, 111–131, 141–161, 176–196, 210–230, 269–289, 304–324, and 326–346; these read LVRY…MVGG, LLAR…WLTG, MLGL…MVAS, IHLT…RGLV, FAGW…LVAG, VQFV…LHAV, TIVL…TLLM, and APLH…AFAV. Histidine 273 contacts heme. Histidine 334 is a heme binding site.

The protein belongs to the COX15/CtaA family. Type 2 subfamily. As to quaternary structure, interacts with CtaB. Requires heme b as cofactor.

The protein resides in the cell membrane. It carries out the reaction Fe(II)-heme o + 2 A + H2O = Fe(II)-heme a + 2 AH2. It participates in porphyrin-containing compound metabolism; heme A biosynthesis; heme A from heme O: step 1/1. Its function is as follows. Catalyzes the conversion of heme O to heme A by two successive hydroxylations of the methyl group at C8. The first hydroxylation forms heme I, the second hydroxylation results in an unstable dihydroxymethyl group, which spontaneously dehydrates, resulting in the formyl group of heme A. This is Heme A synthase from Brucella abortus (strain S19).